The sequence spans 406 residues: Multifunctional CCA protein (406 aa).

ATP-binding residues include glycine 8 and arginine 11. Residues glycine 8 and arginine 11 each coordinate CTP. Mg(2+)-binding residues include glutamate 21 and aspartate 23. Residues arginine 91, arginine 137, and arginine 140 each coordinate ATP. CTP is bound by residues arginine 91, arginine 137, and arginine 140. The 102-residue stretch at 225–326 (TGIHTLKVLE…LKLLNRVDAF (102 aa)) folds into the HD domain.

Belongs to the tRNA nucleotidyltransferase/poly(A) polymerase family. Bacterial CCA-adding enzyme type 1 subfamily. Monomer. Can also form homodimers and oligomers. It depends on Mg(2+) as a cofactor. Requires Ni(2+) as cofactor.

The catalysed reaction is a tRNA precursor + 2 CTP + ATP = a tRNA with a 3' CCA end + 3 diphosphate. It carries out the reaction a tRNA with a 3' CCA end + 2 CTP + ATP = a tRNA with a 3' CCACCA end + 3 diphosphate. Catalyzes the addition and repair of the essential 3'-terminal CCA sequence in tRNAs without using a nucleic acid template. Adds these three nucleotides in the order of C, C, and A to the tRNA nucleotide-73, using CTP and ATP as substrates and producing inorganic pyrophosphate. tRNA 3'-terminal CCA addition is required both for tRNA processing and repair. Also involved in tRNA surveillance by mediating tandem CCA addition to generate a CCACCA at the 3' terminus of unstable tRNAs. While stable tRNAs receive only 3'-terminal CCA, unstable tRNAs are marked with CCACCA and rapidly degraded. The protein is Multifunctional CCA protein of Nitrosococcus oceani (strain ATCC 19707 / BCRC 17464 / JCM 30415 / NCIMB 11848 / C-107).